The sequence spans 79 residues: U-actitoxin-Avd9d (79 aa).

A signal peptide spans 1–19 (NLKVLAVFVLCAILVVVTA). Residues 20–37 (ERRGTETGGYKKDTLEDL) constitute a propeptide that is removed on maturation. The ShKT domain occupies 44–79 (CFDSFKEATCHMAKTNRLCKTSAKYQINCKKTCGLC). 3 cysteine pairs are disulfide-bonded: cysteine 44–cysteine 79, cysteine 53–cysteine 72, and cysteine 62–cysteine 76. The segment at 67–68 (KY) is crucial for binding to potassium channels.

The protein belongs to the sea anemone type 1 potassium channel toxin family. Type 1b subfamily.

It is found in the secreted. The protein resides in the nematocyst. Its function is as follows. Inhibits voltage-gated potassium channels (Kv1/KCNA). This chain is U-actitoxin-Avd9d, found in Anemonia viridis (Snakelocks anemone).